The following is a 107-amino-acid chain: Small ribosomal subunit protein uS17 (107 aa).

It belongs to the universal ribosomal protein uS17 family. Part of the 30S ribosomal subunit.

Its function is as follows. One of the primary rRNA binding proteins, it binds specifically to the 5'-end of 16S ribosomal RNA. The protein is Small ribosomal subunit protein uS17 of Aquifex aeolicus (strain VF5).